The primary structure comprises 378 residues: 23S rRNA (uracil(747)-C(5))-methyltransferase RlmC (378 aa).

Residues Cys3, Cys11, Cys14, and Cys87 each contribute to the [4Fe-4S] cluster site. The S-adenosyl-L-methionine site is built by Gln212, Phe241, Glu262, and Asn309. The active-site Nucleophile is the Cys336.

Belongs to the class I-like SAM-binding methyltransferase superfamily. RNA M5U methyltransferase family. RlmC subfamily.

The catalysed reaction is uridine(747) in 23S rRNA + S-adenosyl-L-methionine = 5-methyluridine(747) in 23S rRNA + S-adenosyl-L-homocysteine + H(+). Catalyzes the formation of 5-methyl-uridine at position 747 (m5U747) in 23S rRNA. The sequence is that of 23S rRNA (uracil(747)-C(5))-methyltransferase RlmC from Shewanella pealeana (strain ATCC 700345 / ANG-SQ1).